The primary structure comprises 377 residues: Trichodiene synthase (377 aa).

It belongs to the trichodiene synthase family.

The catalysed reaction is (2E,6E)-farnesyl diphosphate = trichodiene + diphosphate. It participates in sesquiterpene biosynthesis; trichothecene biosynthesis. TS is a member of the terpene cyclase group of enzymes. It catalyzes the isomerization and cyclization of farnesyl pyro-phosphate to form trichodiene, the first cyclic intermediate in the biosynthetic pathway for trichothecenes. It serves to branch trichothecene biosynthesis from the isoprenoid pathway. In Fusarium poae, this protein is Trichodiene synthase (TRI5).